Here is a 541-residue protein sequence, read N- to C-terminus: Putative transferase YhbX (541 aa).

At 1–60 (MTVFNKFARSFKSHWLLYLSVIVFGITNLVASSGAHMVQRLLFFVLTILVVKRISSLPLR) the chain is on the periplasmic side. Residues 61–81 (LLVAAPFVLLTAADMSISLYS) form a helical membrane-spanning segment. At 82-110 (WCTFGTTFNDGFAISVLQSDPDEVAKMLG) the chain is on the cytoplasmic side. The helical transmembrane segment at 111-131 (MYSPYLCAFAFLSLLFLAVII) threads the bilayer. Residues 132–141 (KYDVSLPTKK) lie on the Periplasmic side of the membrane. A helical membrane pass occupies residues 142-162 (VTGILLLIVISGSLFSACQFA). Residues 163 to 264 (YKDAKNKNAF…RKQIKLFNQA (102 aa)) are Cytoplasmic-facing. A helical transmembrane segment spans residues 265–285 (ISGAPYTALSVPLSLTADSVL). Residues 286 to 541 (SHDIHNYPDN…QGNPTPEGQG (256 aa)) are Periplasmic-facing.

This sequence belongs to the phosphoethanolamine transferase family.

The protein resides in the cell inner membrane. There are several lipid A forms in this strain, including a phosphoethanolamine (1-O-P-pEtN) form; overexpression of this gene does not lead to higher levels of the 1-O-P-pEtN form of lipid A. This chain is Putative transferase YhbX (yhbX), found in Escherichia coli O157:H7.